Here is a 208-residue protein sequence, read N- to C-terminus: Dephospho-CoA kinase (208 aa).

In terms of domain architecture, DPCK spans I5–A201. ATP is bound at residue G13 to T18.

It belongs to the CoaE family.

Its subcellular location is the cytoplasm. The enzyme catalyses 3'-dephospho-CoA + ATP = ADP + CoA + H(+). It participates in cofactor biosynthesis; coenzyme A biosynthesis; CoA from (R)-pantothenate: step 5/5. Its function is as follows. Catalyzes the phosphorylation of the 3'-hydroxyl group of dephosphocoenzyme A to form coenzyme A. This chain is Dephospho-CoA kinase, found in Sodalis glossinidius (strain morsitans).